A 40-amino-acid polypeptide reads, in one-letter code: Photosystem II reaction center protein J (40 aa).

The chain crosses the membrane as a helical span at residues 8 to 28; it reads IPLWVIGTVAGILVIGLIGIF.

Belongs to the PsbJ family. In terms of assembly, PSII is composed of 1 copy each of membrane proteins PsbA, PsbB, PsbC, PsbD, PsbE, PsbF, PsbH, PsbI, PsbJ, PsbK, PsbL, PsbM, PsbT, PsbX, PsbY, PsbZ, Psb30/Ycf12, at least 3 peripheral proteins of the oxygen-evolving complex and a large number of cofactors. It forms dimeric complexes.

Its subcellular location is the plastid. The protein resides in the chloroplast thylakoid membrane. In terms of biological role, one of the components of the core complex of photosystem II (PSII). PSII is a light-driven water:plastoquinone oxidoreductase that uses light energy to abstract electrons from H(2)O, generating O(2) and a proton gradient subsequently used for ATP formation. It consists of a core antenna complex that captures photons, and an electron transfer chain that converts photonic excitation into a charge separation. The protein is Photosystem II reaction center protein J of Lepidium virginicum (Virginia pepperweed).